Reading from the N-terminus, the 513-residue chain is Transmembrane protein 151B (513 aa).

The interval 1–29 (MSPAAPVTESSAAEVHREQTDAPREPQRP) is disordered. The segment covering 14 to 28 (EVHREQTDAPREPQR) has biased composition (basic and acidic residues). A run of 3 helical transmembrane segments spans residues 46-66 (CLLL…CQVT), 93-113 (YIYI…VECW), and 274-294 (LPWY…LSWP). Asparagine 366, asparagine 418, and asparagine 505 each carry an N-linked (GlcNAc...) asparagine glycan.

Belongs to the TMEM151 family.

It localises to the membrane. This chain is Transmembrane protein 151B (tmem151b), found in Danio rerio (Zebrafish).